The primary structure comprises 184 residues: Photosystem I assembly protein Ycf4 (184 aa).

Helical transmembrane passes span 22–42 (FCWA…GISS) and 57–77 (ILFF…LFIS).

The protein belongs to the Ycf4 family.

The protein localises to the plastid. It localises to the chloroplast thylakoid membrane. Functionally, seems to be required for the assembly of the photosystem I complex. This chain is Photosystem I assembly protein Ycf4, found in Populus trichocarpa (Western balsam poplar).